A 429-amino-acid chain; its full sequence is 3-isopropylmalate dehydratase large subunit (429 aa).

[4Fe-4S] cluster is bound by residues C303, C363, and C366.

It belongs to the aconitase/IPM isomerase family. LeuC type 2 subfamily. In terms of assembly, heterodimer of LeuC and LeuD. Requires [4Fe-4S] cluster as cofactor.

The enzyme catalyses (2R,3S)-3-isopropylmalate = (2S)-2-isopropylmalate. The protein operates within amino-acid biosynthesis; L-leucine biosynthesis; L-leucine from 3-methyl-2-oxobutanoate: step 2/4. Its function is as follows. Catalyzes the isomerization between 2-isopropylmalate and 3-isopropylmalate, via the formation of 2-isopropylmaleate. The sequence is that of 3-isopropylmalate dehydratase large subunit from Caldicellulosiruptor bescii (strain ATCC BAA-1888 / DSM 6725 / KCTC 15123 / Z-1320) (Anaerocellum thermophilum).